A 476-amino-acid polypeptide reads, in one-letter code: NADH-quinone oxidoreductase subunit N (476 aa).

14 consecutive transmembrane segments (helical) span residues 10-30, 42-62, 77-97, 108-128, 129-149, 162-182, 202-222, 234-254, 268-288, 296-316, 323-343, 368-388, 392-412, and 445-465; these read AVLP…IGAI, LAIA…AVTI, FMKV…VDWL, AVLV…GDLI, ALYL…AINR, FVLG…IYGF, LVFG…AVPF, PTPV…AVFV, WQQI…FAAI, LLAY…AAGT, VLLY…CVLA, ALAL…AGFV, YVFL…GVVA, and AVLA…TPLI.

Belongs to the complex I subunit 2 family. In terms of assembly, NDH-1 is composed of 14 different subunits. Subunits NuoA, H, J, K, L, M, N constitute the membrane sector of the complex.

The protein localises to the cell inner membrane. The enzyme catalyses a quinone + NADH + 5 H(+)(in) = a quinol + NAD(+) + 4 H(+)(out). Functionally, NDH-1 shuttles electrons from NADH, via FMN and iron-sulfur (Fe-S) centers, to quinones in the respiratory chain. The immediate electron acceptor for the enzyme in this species is believed to be ubiquinone. Couples the redox reaction to proton translocation (for every two electrons transferred, four hydrogen ions are translocated across the cytoplasmic membrane), and thus conserves the redox energy in a proton gradient. The chain is NADH-quinone oxidoreductase subunit N from Azorhizobium caulinodans (strain ATCC 43989 / DSM 5975 / JCM 20966 / LMG 6465 / NBRC 14845 / NCIMB 13405 / ORS 571).